The following is a 156-amino-acid chain: Small ribosomal subunit protein uS7 (156 aa).

Belongs to the universal ribosomal protein uS7 family. In terms of assembly, part of the 30S ribosomal subunit. Contacts proteins S9 and S11.

Functionally, one of the primary rRNA binding proteins, it binds directly to 16S rRNA where it nucleates assembly of the head domain of the 30S subunit. Is located at the subunit interface close to the decoding center, probably blocks exit of the E-site tRNA. In Shewanella halifaxensis (strain HAW-EB4), this protein is Small ribosomal subunit protein uS7.